An 889-amino-acid polypeptide reads, in one-letter code: Alanine--tRNA ligase (889 aa).

Positions 564, 568, 671, and 675 each coordinate Zn(2+).

The protein belongs to the class-II aminoacyl-tRNA synthetase family. Zn(2+) is required as a cofactor.

The protein resides in the cytoplasm. The catalysed reaction is tRNA(Ala) + L-alanine + ATP = L-alanyl-tRNA(Ala) + AMP + diphosphate. In terms of biological role, catalyzes the attachment of alanine to tRNA(Ala) in a two-step reaction: alanine is first activated by ATP to form Ala-AMP and then transferred to the acceptor end of tRNA(Ala). Also edits incorrectly charged Ser-tRNA(Ala) and Gly-tRNA(Ala) via its editing domain. This Pelagibacter ubique (strain HTCC1062) protein is Alanine--tRNA ligase.